The sequence spans 197 residues: Nucleoside triphosphate pyrophosphatase (197 aa).

Aspartate 72 functions as the Proton acceptor in the catalytic mechanism.

The protein belongs to the Maf family. Requires a divalent metal cation as cofactor.

It localises to the cytoplasm. It carries out the reaction a ribonucleoside 5'-triphosphate + H2O = a ribonucleoside 5'-phosphate + diphosphate + H(+). The catalysed reaction is a 2'-deoxyribonucleoside 5'-triphosphate + H2O = a 2'-deoxyribonucleoside 5'-phosphate + diphosphate + H(+). Functionally, nucleoside triphosphate pyrophosphatase. May have a dual role in cell division arrest and in preventing the incorporation of modified nucleotides into cellular nucleic acids. The chain is Nucleoside triphosphate pyrophosphatase from Corynebacterium efficiens (strain DSM 44549 / YS-314 / AJ 12310 / JCM 11189 / NBRC 100395).